We begin with the raw amino-acid sequence, 429 residues long: D-amino acid dehydrogenase (429 aa).

Position 3-17 (3-17 (VLILGSGVIGVTSAW)) interacts with FAD.

The protein belongs to the DadA oxidoreductase family. The cofactor is FAD.

The catalysed reaction is a D-alpha-amino acid + A + H2O = a 2-oxocarboxylate + AH2 + NH4(+). It functions in the pathway amino-acid degradation; D-alanine degradation; NH(3) and pyruvate from D-alanine: step 1/1. In terms of biological role, oxidative deamination of D-amino acids. The chain is D-amino acid dehydrogenase from Xanthomonas euvesicatoria pv. vesicatoria (strain 85-10) (Xanthomonas campestris pv. vesicatoria).